Reading from the N-terminus, the 271-residue chain is Orotidine 5'-phosphate decarboxylase (271 aa).

The active-site Proton donor is the Lys97.

The protein belongs to the OMP decarboxylase family. Type 2 subfamily.

The enzyme catalyses orotidine 5'-phosphate + H(+) = UMP + CO2. It functions in the pathway pyrimidine metabolism; UMP biosynthesis via de novo pathway; UMP from orotate: step 2/2. The protein is Orotidine 5'-phosphate decarboxylase of Leptospira borgpetersenii serovar Hardjo-bovis (strain JB197).